The primary structure comprises 362 residues: Peptide chain release factor 1 (362 aa).

Glutamine 235 is subject to N5-methylglutamine.

Belongs to the prokaryotic/mitochondrial release factor family. Methylated by PrmC. Methylation increases the termination efficiency of RF1.

The protein resides in the cytoplasm. Peptide chain release factor 1 directs the termination of translation in response to the peptide chain termination codons UAG and UAA. This chain is Peptide chain release factor 1, found in Buchnera aphidicola subsp. Baizongia pistaciae (strain Bp).